A 173-amino-acid chain; its full sequence is Inorganic pyrophosphatase (173 aa).

Lys-29, Arg-43, and Tyr-55 together coordinate substrate. Asp-65, Asp-70, and Asp-102 together coordinate Mg(2+). A substrate-binding site is contributed by Tyr-141.

Belongs to the PPase family. As to quaternary structure, homohexamer. Requires Mg(2+) as cofactor.

It localises to the cytoplasm. The enzyme catalyses diphosphate + H2O = 2 phosphate + H(+). Functionally, catalyzes the hydrolysis of inorganic pyrophosphate (PPi) forming two phosphate ions. The chain is Inorganic pyrophosphatase from Gluconobacter oxydans (strain 621H) (Gluconobacter suboxydans).